The chain runs to 342 residues: Spore photoproduct lyase (342 aa).

The Radical SAM core domain maps to 77–305 (SKPSAEYAIP…EEKRRYKWGR (229 aa)). Residues Cys-91, Cys-95, and Cys-98 each contribute to the [4Fe-4S] cluster site. A DNA-binding region (H-T-H motif) is located at residues 218–235 (EAAVKVAKAGYPLGFIVA).

Belongs to the radical SAM superfamily. SPL family. Monomer or homodimer. Requires [4Fe-4S] cluster as cofactor. The cofactor is S-adenosyl-L-methionine.

The enzyme catalyses (5R)-5,6-dihydro-5-(thymidin-7-yl)thymidine in DNA = a thymidine dimer in DNA. In terms of biological role, involved in repair of UV radiation-induced DNA damage during spore germination. Can repair thymine dimer 5-thyminyl-5,6-dihydrothymine (known as spore photoproduct (SP)) by in situ monomerization of SP to two thymines. In Bacillus subtilis (strain 168), this protein is Spore photoproduct lyase (splB).